Here is a 189-residue protein sequence, read N- to C-terminus: Photosystem I assembly protein Ycf4 (189 aa).

2 helical membrane-spanning segments follow: residues 29–49 and 69–89; these read WATIVTLGASGFLLAGISSYL and LVMGLYGAAGLLLATYLWLVI.

Belongs to the Ycf4 family.

Its subcellular location is the cellular thylakoid membrane. Its function is as follows. Seems to be required for the assembly of the photosystem I complex. The sequence is that of Photosystem I assembly protein Ycf4 from Nostoc punctiforme (strain ATCC 29133 / PCC 73102).